The following is a 665-amino-acid chain: Cysteine-rich receptor-like protein kinase 41 (665 aa).

The signal sequence occupies residues 1–27 (MTSSCSLSRPQHLFFFFFLFVPFLSLG). At 28 to 280 (QQISVDINSA…DPKPGNDKVK (253 aa)) the chain is on the extracellular side. 2 Gnk2-homologous domains span residues 42-148 (PSNP…DKPI) and 154-260 (TSPV…SDLR). Asn120, Asn165, and Asn236 each carry an N-linked (GlcNAc...) asparagine glycan. Residues 281-301 (IIIATVCSVIGFAIIAVFLYF) traverse the membrane as a helical segment. The Cytoplasmic portion of the chain corresponds to 302–665 (FMTRNRRTAK…DVTITEFDAR (364 aa)). Residues 344 to 624 (FSRDNQLGEG…VVMLNANSFT (281 aa)) form the Protein kinase domain. Residues 350 to 358 (LGEGGFGAV) and Lys372 contribute to the ATP site. Tyr417 is subject to Phosphotyrosine. Asp469 (proton acceptor) is an active-site residue. Ser473 bears the Phosphoserine mark. Thr511 carries the phosphothreonine modification. Position 519 is a phosphotyrosine (Tyr519).

This sequence belongs to the protein kinase superfamily. Ser/Thr protein kinase family. CRK subfamily.

Its subcellular location is the membrane. The catalysed reaction is L-seryl-[protein] + ATP = O-phospho-L-seryl-[protein] + ADP + H(+). It catalyses the reaction L-threonyl-[protein] + ATP = O-phospho-L-threonyl-[protein] + ADP + H(+). The sequence is that of Cysteine-rich receptor-like protein kinase 41 (CRK41) from Arabidopsis thaliana (Mouse-ear cress).